The following is a 79-amino-acid chain: Small ribosomal subunit protein bS16c (79 aa).

The protein belongs to the bacterial ribosomal protein bS16 family.

It localises to the plastid. It is found in the chloroplast. The polypeptide is Small ribosomal subunit protein bS16c (Thalassiosira pseudonana (Marine diatom)).